A 399-amino-acid chain; its full sequence is Myb-related transcription factor, partner of profilin (399 aa).

The region spanning 12-84 (TTRLRKPRFS…EVQKRWNDFK (73 aa)) is the Myb-like domain. Positions 83–86 (FKRR) match the Nuclear localization signal motif. Disordered regions lie at residues 87–108 (TKEK…AEDA), 127–261 (PGAG…PSLD), 297–332 (LLPG…PKVE), and 358–399 (APRS…WKSP). A compositionally biased stretch (low complexity) spans 127 to 136 (PGAGAGAEEP). A compositionally biased stretch (pro residues) spans 137-149 (PAAPSSQPPPPSA). A compositionally biased stretch (basic and acidic residues) spans 156 to 170 (LSEDRREDRRADTSA). Pro residues-rich tracts occupy residues 219-252 (SPPP…PPPT), 305-329 (SLPP…PPAP), and 366-377 (PRPPPAPLPPHD). Over residues 381 to 399 (HKRRKGFPTRKRRGRWKSP) the composition is skewed to basic residues. 2 short sequence motifs (nuclear localization signal) span residues 382 to 385 (KRRK) and 390 to 393 (RKRR).

In terms of assembly, interacts with PFN1. Homodimer and heterodimer with PFN1.

Its subcellular location is the nucleus. Its function is as follows. Transcriptional repressor; DNA-binding protein that specifically recognizes the core sequence 5'-YAAC[GT]G-3'. Dimerization with PFN1 reduces its DNA-binding capacity. The chain is Myb-related transcription factor, partner of profilin (MYPOP) from Homo sapiens (Human).